Consider the following 185-residue polypeptide: ATP-dependent protease subunit HslV (185 aa).

Threonine 12 is a catalytic residue. Na(+) contacts are provided by alanine 168, cysteine 171, and threonine 174.

The protein belongs to the peptidase T1B family. HslV subfamily. A double ring-shaped homohexamer of HslV is capped on each side by a ring-shaped HslU homohexamer. The assembly of the HslU/HslV complex is dependent on binding of ATP.

It is found in the cytoplasm. The enzyme catalyses ATP-dependent cleavage of peptide bonds with broad specificity.. With respect to regulation, allosterically activated by HslU binding. Protease subunit of a proteasome-like degradation complex believed to be a general protein degrading machinery. This is ATP-dependent protease subunit HslV from Cereibacter sphaeroides (strain ATCC 17023 / DSM 158 / JCM 6121 / CCUG 31486 / LMG 2827 / NBRC 12203 / NCIMB 8253 / ATH 2.4.1.) (Rhodobacter sphaeroides).